Consider the following 170-residue polypeptide: Lipocalin Cav p 2.0101 (170 aa).

Residues 1-16 (MMQILLLALAVSLACA) form the signal peptide. Cystine bridges form between C56–C60 and C75–C168.

The protein belongs to the calycin superfamily. Lipocalin family. Post-translationally, not N-linked glycosylated. As to expression, expressed in harderian gland (at protein level). Expressed in hair (at protein level). Expressed in submaxillary gland and harderian gland.

It is found in the secreted. The polypeptide is Lipocalin Cav p 2.0101 (Lcncavp2) (Cavia porcellus (Guinea pig)).